A 330-amino-acid polypeptide reads, in one-letter code: Carbonic anhydrase 1 (330 aa).

The interval 1-109 is chloroplast transit peptide-like; that stretch reads MSTASAFAIN…AAARIDQITA (109 aa).

Belongs to the beta-class carbonic anhydrase family. Homohexamer.

It localises to the cytoplasm. It catalyses the reaction hydrogencarbonate + H(+) = CO2 + H2O. Functionally, reversible hydration of carbon dioxide. This Flaveria linearis (Narrowleaf yellowtops) protein is Carbonic anhydrase 1.